We begin with the raw amino-acid sequence, 209 residues long: Large ribosomal subunit protein bL25 (209 aa).

Residues 190-209 (LKSEEAASEGAAEEEAKDGE) form a disordered region. Acidic residues predominate over residues 200-209 (AAEEEAKDGE).

The protein belongs to the bacterial ribosomal protein bL25 family. CTC subfamily. Part of the 50S ribosomal subunit; part of the 5S rRNA/L5/L18/L25 subcomplex. Contacts the 5S rRNA. Binds to the 5S rRNA independently of L5 and L18.

This is one of the proteins that binds to the 5S RNA in the ribosome where it forms part of the central protuberance. The chain is Large ribosomal subunit protein bL25 from Brucella anthropi (strain ATCC 49188 / DSM 6882 / CCUG 24695 / JCM 21032 / LMG 3331 / NBRC 15819 / NCTC 12168 / Alc 37) (Ochrobactrum anthropi).